The primary structure comprises 400 residues: Mu-type opioid receptor (400 aa).

The Extracellular segment spans residues 1–68 (MDSSAVPTNA…CPPTGSPSMI (68 aa)). 5 N-linked (GlcNAc...) asparagine glycosylation sites follow: N9, N12, N33, N40, and N48. Residues 69–93 (TAITIMALYSIVCVVGLFGNFLVMY) form a helical membrane-spanning segment. The Cytoplasmic segment spans residues 94–106 (VIVRYTKMKTATN). The chain crosses the membrane as a helical span at residues 107–131 (IYIFNLALADALVTSTLPFQSVNYL). Residues 132-142 (MGTWPFGTILC) lie on the Extracellular side of the membrane. C142 and C219 are oxidised to a cystine. The chain crosses the membrane as a helical span at residues 143 to 165 (KIVISIDYYNMSTSIFTLCTMSV). The Cytoplasmic portion of the chain corresponds to 166–185 (DRYIAVCHPVKALDFRTPRN). Y168 carries the phosphotyrosine modification. A helical membrane pass occupies residues 186 to 207 (AKIINVCNWILSSAIGLPVMFM). Topologically, residues 208–230 (ATTKYRQGSIDCTLTFSHPSWYW) are extracellular. Residues 231–255 (ENLLKICVFIFAFIMPVLIITVCYG) form a helical membrane-spanning segment. Residues 256–283 (LMILRLKSVRMLSGSKEKDRNLRRITRM) lie on the Cytoplasmic side of the membrane. A helical transmembrane segment spans residues 284-306 (VLVVVAVFIICWTPIHIYVIIKA). The Extracellular segment spans residues 307-314 (LVTIPETT). The helical transmembrane segment at 315 to 338 (FQTVSWHFCIALGYTNSCLNPVLY) threads the bilayer. Positions 334–338 (NPVLY) match the NPxxY; plays a role in stabilizing the activated conformation of the receptor motif. The Cytoplasmic portion of the chain corresponds to 339 to 400 (AFLDEDFKRC…NLEAETAPLP (62 aa)). A lipid anchor (S-palmitoyl cysteine) is attached at C353. The disordered stretch occupies residues 364-386 (NSTRIRQNTRDHPSTANTVDRTN). The residue at position 365 (S365) is a Phosphoserine. The residue at position 372 (T372) is a Phosphothreonine. The residue at position 377 (S377) is a Phosphoserine. T396 carries the post-translational modification Phosphothreonine.

This sequence belongs to the G-protein coupled receptor 1 family. In terms of assembly, forms homooligomers and heterooligomers with other GPCRs, such as OPRD1, OPRK1, OPRL1, NPFFR2, ADRA2A, SSTR2, CNR1 and CCR5 (probably in dimeric forms). Interacts with heterotrimeric G proteins; interaction with a heterotrimeric complex containing GNAI1, GNB1 and GNG2 stabilizes the active conformation of the receptor and increases its affinity for endomorphin-2, the synthetic opioid peptide DAMGO and for morphinan agonists. Interacts with PPL; the interaction disrupts agonist-mediated G-protein activation. Interacts (via C-terminus) with DNAJB4 (via C-terminus). Interacts with calmodulin; the interaction inhibits the constitutive activity of OPRM1; it abolishes basal and attenuates agonist-stimulated G-protein coupling. Interacts with FLNA, PLD2, RANBP9 and WLS and GPM6A. Interacts with RTP4. Interacts with SYP and GNAS. Interacts with RGS9, RGS17, RGS20, RGS4, PPP1R9B and HINT1. In terms of processing, phosphorylated. Differentially phosphorylated in basal and agonist-induced conditions. Agonist-mediated phosphorylation modulates receptor internalization. Phosphorylated by GRK2 in a agonist-dependent manner. Phosphorylation at Tyr-168 requires receptor activation, is dependent on non-receptor protein tyrosine kinase Src and results in a decrease in agonist efficacy by reducing G-protein coupling efficiency. Phosphorylated on tyrosine residues; the phosphorylation is involved in agonist-induced G-protein-independent receptor down-regulation. Phosphorylation at Ser-377 is involved in G-protein-dependent but not beta-arrestin-dependent activation of the ERK pathway. Post-translationally, ubiquitinated. A basal ubiquitination seems not to be related to degradation. Ubiquitination is increased upon formation of OPRM1:OPRD1 oligomers leading to proteasomal degradation; the ubiquitination is diminished by RTP4.

It localises to the cell membrane. The protein localises to the cell projection. The protein resides in the axon. It is found in the perikaryon. Its subcellular location is the dendrite. It localises to the endosome. Functionally, receptor for endogenous opioids such as beta-endorphin and endomorphin. Receptor for natural and synthetic opioids including morphine, heroin, DAMGO, fentanyl, etorphine, buprenorphin and methadone. Also activated by enkephalin peptides, such as Met-enkephalin or Met-enkephalin-Arg-Phe, with higher affinity for Met-enkephalin-Arg-Phe. Agonist binding to the receptor induces coupling to an inactive GDP-bound heterotrimeric G-protein complex and subsequent exchange of GDP for GTP in the G-protein alpha subunit leading to dissociation of the G-protein complex with the free GTP-bound G-protein alpha and the G-protein beta-gamma dimer activating downstream cellular effectors. The agonist- and cell type-specific activity is predominantly coupled to pertussis toxin-sensitive G(i) and G(o) G alpha proteins, GNAI1, GNAI2, GNAI3 and GNAO1, and to a lesser extent to pertussis toxin-insensitive G alpha proteins GNAZ and GNA15. They mediate an array of downstream cellular responses, including inhibition of adenylate cyclase activity and both N-type and L-type calcium channels, activation of inward rectifying potassium channels, mitogen-activated protein kinase (MAPK), phospholipase C (PLC), phosphoinositide/protein kinase (PKC), phosphoinositide 3-kinase (PI3K) and regulation of NF-kappa-B. Also couples to adenylate cyclase stimulatory G alpha proteins. The selective temporal coupling to G-proteins and subsequent signaling can be regulated by RGSZ proteins, such as RGS9, RGS17 and RGS4. Phosphorylation by members of the GPRK subfamily of Ser/Thr protein kinases and association with beta-arrestins is involved in short-term receptor desensitization. Beta-arrestins associate with the GPRK-phosphorylated receptor and uncouple it from the G-protein thus terminating signal transduction. The phosphorylated receptor is internalized through endocytosis via clathrin-coated pits which involves beta-arrestins. The activation of the ERK pathway occurs either in a G-protein-dependent or a beta-arrestin-dependent manner and is regulated by agonist-specific receptor phosphorylation. Acts as a class A G-protein coupled receptor (GPCR) which dissociates from beta-arrestin at or near the plasma membrane and undergoes rapid recycling. Receptor down-regulation pathways are varying with the agonist and occur dependent or independent of G-protein coupling. Endogenous ligands induce rapid desensitization, endocytosis and recycling. Heterooligomerization with other GPCRs can modulate agonist binding, signaling and trafficking properties. Involved in neurogenesis. This chain is Mu-type opioid receptor (OPRM1), found in Macaca mulatta (Rhesus macaque).